A 149-amino-acid chain; its full sequence is Azurin (149 aa).

The first 20 residues, Met-1–Ala-20, serve as a signal peptide directing secretion. The Plastocyanin-like domain occupies Ala-21 to Asn-149. Residues Cys-23 and Cys-46 are joined by a disulfide bond. Positions 66, 132, 137, and 141 each coordinate Cu cation.

It localises to the periplasm. In terms of biological role, transfers electrons from cytochrome c551 to cytochrome oxidase. The polypeptide is Azurin (azu) (Achromobacter denitrificans (Alcaligenes denitrificans)).